The sequence spans 347 residues: Isopentenyl-diphosphate delta-isomerase (347 aa).

Residue arginine 9–lysine 10 coordinates substrate. FMN is bound by residues serine 67, serine 68–threonine 70, serine 98, and asparagine 127. Substrate is bound at residue serine 98 to arginine 100. Glutamine 162 is a binding site for substrate. Glutamate 163 is a Mg(2+) binding site. FMN-binding positions include lysine 194, threonine 224, glycine 274–lysine 276, and alanine 295–alanine 296.

The protein belongs to the IPP isomerase type 2 family. In terms of assembly, homooctamer. Dimer of tetramers. The cofactor is FMN. NADPH serves as cofactor. Requires Mg(2+) as cofactor.

It is found in the cytoplasm. It carries out the reaction isopentenyl diphosphate = dimethylallyl diphosphate. Involved in the biosynthesis of isoprenoids. Catalyzes the 1,3-allylic rearrangement of the homoallylic substrate isopentenyl (IPP) to its allylic isomer, dimethylallyl diphosphate (DMAPP). The chain is Isopentenyl-diphosphate delta-isomerase from Pseudescherichia vulneris (Escherichia vulneris).